The primary structure comprises 299 residues: Ankyrin repeat domain-containing protein 54 (299 aa).

The tract at residues 1–32 is disordered; sequence MAAAAGGADDESRSGRSSSDGECAVAPEPLTG. The residue at position 2 (A2) is an N-acetylalanine. A phosphoserine mark is found at S57 and S62. Positions 98 to 116 match the Nuclear localization signal (NLS) motif; the sequence is RRLGPTGKEVHALKRLRDS. 4 ANK repeats span residues 108 to 137, 141 to 170, 174 to 203, and 207 to 239; these read HALK…DPCA, KGRT…DPNQ, LGNT…RVDA, and AGRT…EVKQ. An LYN-binding region spans residues 140–240; that stretch reads DKGRTALHFA…EAVRLEVKQI (101 aa). Positions 282–292 match the Nuclear export signal (NES) motif; that stretch reads LLASFTSLSLQ.

Interacts (via ankyrin repeat region) with LYN (via SH3-domain) in an activation-independent status of LYN. Forms a multiprotein complex with LYN and HCLS1. Interacts with TSN2, VAV1, DBNL and LASP1.

The protein localises to the nucleus. It localises to the cytoplasm. It is found in the midbody. In terms of biological role, plays an important role in regulating intracellular signaling events associated with erythroid terminal differentiation. The protein is Ankyrin repeat domain-containing protein 54 (ANKRD54) of Bos taurus (Bovine).